The chain runs to 172 residues: Putative B3 domain-containing protein At1g05615 (172 aa).

A DNA-binding region (TF-B3) is located at residues V69–T169.

The protein localises to the nucleus. This chain is Putative B3 domain-containing protein At1g05615, found in Arabidopsis thaliana (Mouse-ear cress).